A 1499-amino-acid chain; its full sequence is Ring canal kelch homolog (1499 aa).

The segment covering 56 to 66 (LDESSQKQLPR) has biased composition (polar residues). A disordered region spans residues 56-75 (LDESSQKQLPRSNGKEKTTG). In terms of domain architecture, BTB spans 100 to 166 (CDVVLVAEGI…VYRAVVEVTE (67 aa)). 6 Kelch repeats span residues 351 to 396 (VLLV…VLGD), 397 to 443 (KVYA…VLNN), 444 to 490 (CIYA…VVNG), 492 to 539 (LYAV…VLDN), 541 to 586 (LYAV…AHNG), and 588 to 634 (LYVV…MIDK). Residue Sec637 is a non-standard amino acid, selenocysteine. Disordered stretches follow at residues 679–714 (AGQA…GNNV), 750–786 (LQYA…GGGG), 825–856 (AGYD…CPNL), 984–1017 (NQSN…SSSV), 1033–1085 (SMNN…GNGG), 1107–1160 (ASTS…PVDV), 1301–1321 (QVGR…PLRT), and 1334–1499 (ARSP…TASE). Low complexity predominate over residues 698–713 (NPEPANSNNSAPNGNN). Residues 776 to 786 (GERGAVGGGGG) are compositionally biased toward gly residues. Positions 986-1003 (SNSSSASSASPYGANGPA) are enriched in low complexity. A compositionally biased stretch (polar residues) spans 1004 to 1017 (TTSQPNPTKDSSSV). A compositionally biased stretch (low complexity) spans 1040–1054 (SSAAHGTASGSAPAA). Residues 1065–1085 (ISGGASGGGAGGAGSSGGNGG) show a composition bias toward gly residues. Over residues 1107–1119 (ASTSTTLGGKSTG) the composition is skewed to low complexity. A compositionally biased stretch (polar residues) spans 1135-1147 (GPSDPTAGTSAPQ). Positions 1348 to 1359 (NREKPREVRRIT) are enriched in basic and acidic residues. The span at 1401–1410 (SSASSSSDSD) shows a compositional bias: low complexity. The span at 1460–1471 (VGSSSNETSDSL) shows a compositional bias: polar residues.

The protein localises to the cytoplasm. It is found in the cytoskeleton. May play a role in organizing the actin cytoskeleton. The sequence is that of Ring canal kelch homolog from Anopheles stephensi (Indo-Pakistan malaria mosquito).